The chain runs to 49 residues: DNA-directed RNA polymerase subunit Rpo12 (49 aa).

Residues cysteine 11, cysteine 27, and cysteine 30 each coordinate Zn(2+).

This sequence belongs to the archaeal Rpo12/eukaryotic RPC10 RNA polymerase subunit family. In terms of assembly, part of the RNA polymerase complex. Zn(2+) is required as a cofactor.

It localises to the cytoplasm. It catalyses the reaction RNA(n) + a ribonucleoside 5'-triphosphate = RNA(n+1) + diphosphate. Functionally, DNA-dependent RNA polymerase (RNAP) catalyzes the transcription of DNA into RNA using the four ribonucleoside triphosphates as substrates. The protein is DNA-directed RNA polymerase subunit Rpo12 of Pyrococcus furiosus (strain ATCC 43587 / DSM 3638 / JCM 8422 / Vc1).